A 327-amino-acid polypeptide reads, in one-letter code: Zinc transport protein ZntB (327 aa).

The Cytoplasmic portion of the chain corresponds to 1–273; the sequence is MEAIKGSEVN…SRRSYTMSLM (273 aa). Residues 274-294 form a helical membrane-spanning segment; sequence AMVFLPSTFLTGLFGVNLGGI. Residues 295–300 lie on the Periplasmic side of the membrane; the sequence is PGGGWH. Residues 301–321 traverse the membrane as a helical segment; the sequence is LGFSVFCVALVLLIGGVTWWL. Residues 322–327 lie on the Cytoplasmic side of the membrane; it reads HRSKWL.

It belongs to the CorA metal ion transporter (MIT) (TC 1.A.35) family.

Its subcellular location is the cell inner membrane. It carries out the reaction Zn(2+)(out) + H(+)(out) = Zn(2+)(in) + H(+)(in). Functionally, zinc transporter. Acts as a Zn(2+):proton symporter, which likely mediates zinc ion uptake. The chain is Zinc transport protein ZntB from Cronobacter sakazakii (strain ATCC BAA-894) (Enterobacter sakazakii).